The sequence spans 593 residues: Vicilin Jug r 2.0101 (593 aa).

Composition is skewed to basic and acidic residues over residues 46–76 (LEED…EQRY) and 97–118 (RRCE…DRQD). The segment at 46–123 (LEEDQRSQEE…RDRQDPQQQY (78 aa)) is disordered. IgE-binding regions lie at residues 49–58 (DQRSQEERER), 76–85 (YEQCQQQCER), and 101–110 (QRRQQEERER). Residues 140 to 149 (QRQCQQRCER) are igE-binding. Involved in cross-reactivity with peanut allergen Ara h 2; able to inhibit binding of IgE from a peanut-allergic patient to Ara h 2. Positions 150 to 178 (QYKEQQGRERGPEASPRRESRGREEEQQR) are enriched in basic and acidic residues. The disordered stretch occupies residues 150–184 (QYKEQQGRERGPEASPRRESRGREEEQQRHNPYYF). 2 T-cell epitope; recognized by the HLA-DRB1-restricted CD4(+) T-cells regions span residues 175-193 (EQQR…RSRH) and 206-225 (FTER…VILD). A Cu cation-binding site is contributed by Y182. 2 Cupin type-1 domains span residues 187-341 (QSIR…DRLE) and 386-556 (ISLK…EEIE). N-linked (GlcNAc...) asparagine glycosylation is present at N229. T-cell epitope; recognized by the HLA-DRB1-restricted CD4(+) T-cells stretches follow at residues 246–265 (TRGR…SFNL), 302–321 (PGQF…QSYL), 318–337 (QSYL…NTPR), 382–401 (SGGP…QFGQ), 414–433 (QEMD…MMVP), and 438–457 (KATV…MACP). C456 and H458 together coordinate Cu cation. Residues 463 to 470 (SYEGQGRR) form an igE-binding region. Positions 478–497 (TGRFQKVTARLARGDIFVIP) are T-cell epitope; recognized by the HLA-DRB1-restricted CD4(+) T-cells. Position 500 (H500) interacts with Cu cation. The stretch at 529–556 (LAGQNNIINQLEREAKELSFNMPREEIE) forms a coiled coil. Residues 541–555 (REAKELSFNMPREEI) are igE-binding. T-cell epitope; recognized by the HLA-DRB1-restricted CD4(+) T-cells stretches follow at residues 542–561 (EAKE…IFES) and 558–577 (IFES…SRRG).

Belongs to the 7S seed storage protein family. In terms of processing, proteolytically cleaved. Expressed in seed (at protein level).

In terms of biological role, seed storage protein. This is Vicilin Jug r 2.0101 from Juglans regia (English walnut).